A 453-amino-acid polypeptide reads, in one-letter code: Odorant receptor 83a (453 aa).

Topologically, residues 1–28 are cytoplasmic; it reads MKSTFKEERIKDDSKRRDLFVFVRQTMC. Residues 29-49 form a helical membrane-spanning segment; that stretch reads IAAMYPFGYYVNGSGVLAVLV. Topologically, residues 50–85 are extracellular; that stretch reads RFCDLTYELFNYFVSVHIAGLYICTIYINYGQGDLD. Residues 86-106 form a helical membrane-spanning segment; the sequence is FFVNCLIQTIIYLWTIAMKLY. The Cytoplasmic portion of the chain corresponds to 107–148; sequence FRRFRPGLLNTILSNINDEYETRSAVGFSFVTMAGSYRMSKL. Residues 149–169 traverse the membrane as a helical segment; the sequence is WIKTYVYCCYIGTIFWLALPI. Over 170-203 the chain is Extracellular; the sequence is AYRDRSLPLACWYPFDYTQPGVYEVVFLLQAMGQ. Residues 204–224 form a helical membrane-spanning segment; that stretch reads IQVAASFASSSGLHMVLCVLI. Over 225 to 322 the chain is Cytoplasmic; it reads SGQYDVLFCS…ALKKIESFYS (98 aa). Residues 323–343 traverse the membrane as a helical segment; that stretch reads PIWFVKIGEVTFLMCLVAFVS. Over 344–359 the chain is Extracellular; the sequence is TKSTAANSFMRMVSLG. A helical transmembrane segment spans residues 360–380; the sequence is QYLLLVLYELFIICYFADIVF. The Cytoplasmic portion of the chain corresponds to 381 to 408; the sequence is QNSQRCGEALWRSPWQRHLKDVRSDYMF. Residues 409 to 429 traverse the membrane as a helical segment; the sequence is FMLNSRRQFQLTAGKISNLNV. Topologically, residues 430–453 are extracellular; sequence DRFRGTITTAFSFLTLLQKMDARE.

The protein belongs to the insect chemoreceptor superfamily. Heteromeric odorant receptor channel (TC 1.A.69) family. Or2a subfamily. Interacts with Orco. Complexes exist early in the endomembrane system in olfactory sensory neurons (OSNs), coupling these complexes to the conserved ciliary trafficking pathway.

It localises to the cell membrane. Odorant receptor which mediates acceptance or avoidance behavior, depending on its substrates. The odorant receptor repertoire encodes a large collection of odor stimuli that vary widely in identity, intensity, and duration. May form a complex with Orco to form odorant-sensing units, providing sensitive and prolonged odorant signaling and calcium permeability. Involved in the behavioral responses to pentanol, ethyl acetate, and propyl acetate. The protein is Odorant receptor 83a (Or83a) of Drosophila melanogaster (Fruit fly).